The following is a 639-amino-acid chain: 3D-(3,5/4)-trihydroxycyclohexane-1,2-dione hydrolase (639 aa).

A thiamine diphosphate-binding site is contributed by Glu62. The thiamine pyrophosphate binding stretch occupies residues Ser438–Gly518. 2 residues coordinate Mg(2+): Asp489 and Asn516.

This sequence belongs to the TPP enzyme family. Mg(2+) serves as cofactor. Thiamine diphosphate is required as a cofactor.

It catalyses the reaction 3D-3,5/4-trihydroxycyclohexane-1,2-dione + H2O = 5-deoxy-D-glucuronate + H(+). It participates in polyol metabolism; myo-inositol degradation into acetyl-CoA; acetyl-CoA from myo-inositol: step 3/7. Involved in the cleavage of the C1-C2 bond of 3D-(3,5/4)-trihydroxycyclohexane-1,2-dione (THcHDO) to yield 5-deoxy-glucuronate (5DG). This Clostridium perfringens (strain ATCC 13124 / DSM 756 / JCM 1290 / NCIMB 6125 / NCTC 8237 / Type A) protein is 3D-(3,5/4)-trihydroxycyclohexane-1,2-dione hydrolase.